A 289-amino-acid polypeptide reads, in one-letter code: Serine/threonine-protein phosphatase Pgam5, mitochondrial (289 aa).

Belongs to the phosphoglycerate mutase family. BPG-dependent PGAM subfamily. In terms of assembly, interacts with Pk92B/ASK1.

Its subcellular location is the mitochondrion outer membrane. The catalysed reaction is O-phospho-L-seryl-[protein] + H2O = L-seryl-[protein] + phosphate. It catalyses the reaction O-phospho-L-threonyl-[protein] + H2O = L-threonyl-[protein] + phosphate. Its function is as follows. Displays phosphatase activity for serine/threonine residues, and dephosphorylates and activates Pk92B kinase. Has apparently no phosphoglycerate mutase activity. The chain is Serine/threonine-protein phosphatase Pgam5, mitochondrial from Drosophila grimshawi (Hawaiian fruit fly).